A 152-amino-acid polypeptide reads, in one-letter code: Deoxyuridine 5'-triphosphate nucleotidohydrolase (152 aa).

Substrate-binding positions include 71–73 (RSG), Asn84, 88–90 (LID), and Met98.

It belongs to the dUTPase family. Requires Mg(2+) as cofactor.

The enzyme catalyses dUTP + H2O = dUMP + diphosphate + H(+). The protein operates within pyrimidine metabolism; dUMP biosynthesis; dUMP from dCTP (dUTP route): step 2/2. In terms of biological role, this enzyme is involved in nucleotide metabolism: it produces dUMP, the immediate precursor of thymidine nucleotides and it decreases the intracellular concentration of dUTP so that uracil cannot be incorporated into DNA. The chain is Deoxyuridine 5'-triphosphate nucleotidohydrolase from Haemophilus ducreyi (strain 35000HP / ATCC 700724).